The following is a 1133-amino-acid chain: Sterol regulatory element-binding protein 2 (1133 aa).

Residues 1–50 (MDENSELGGLETMETLTELGDELTLGDIDEMLQFVSNQVGEFSDLFSEQL) form a transcriptional activation (acidic) region. The Cytoplasmic segment spans residues 1 to 473 (MDENSELGGL…VALGMVDRSR (473 aa)). The segment covering 56–65 (GGGGGSGSGG) has biased composition (gly residues). The segment at 56–136 (GGGGGSGSGG…PQPQPQPPAQ (81 aa)) is disordered. Positions 92 to 109 (PLSTFSPSSTSPQAPALQ) are enriched in low complexity. A compositionally biased stretch (pro residues) spans 114-134 (PTPPRATPVLQPRPQPQPQPP). The interaction with LMNA stretch occupies residues 229-483 (QQVPVLVQPQ…ILLCVLTFLG (255 aa)). The bHLH domain occupies 322-372 (ERRTTHNIIEKRYRSSINDKIIELKDLVMGTDAKMHKSGVLRKAIDYIKYL). Residues 372 to 393 (LQQVNHKLRQENMVLKLANQKN) are leucine-zipper. K456 is covalently cross-linked (Glycyl lysine isopeptide (Lys-Gly) (interchain with G-Cter in SUMO2)). The chain crosses the membrane as a helical span at residues 474-494 (ILLCVLTFLGLSFNPLTSLLQ). Residues 495–525 (WGGAHNPDQHPYSGSGRNVLSLESGSGGWFD) are Lumenal-facing. The helical transmembrane segment at 526–546 (WMMPTLLLWLLNGVIVLSVFV) threads the bilayer. The Cytoplasmic portion of the chain corresponds to 547–1133 (KLLVHGEPVI…LGGGTAIAAS (587 aa)). S1090 carries the post-translational modification Phosphoserine.

This sequence belongs to the SREBP family. Homodimer; efficient DNA binding of the soluble transcription factor fragment requires dimerization with another bHLH protein. Interacts with LMNA. As to quaternary structure, forms a tight complex with SCAP, the SCAP-SREBP complex, in the endoplasmic reticulum membrane and the Golgi apparatus. Interacts with PAQR3; the interaction anchors the SCAP-SREBP complex to the Golgi apparatus in low cholesterol conditions. Interacts (via C-terminal domain) with RNF139. Processed in the Golgi apparatus, releasing the protein from the membrane. At low cholesterol the SCAP-SREBP complex is recruited into COPII vesicles for export from the endoplasmic reticulum. In the Golgi, complex SREBPs are cleaved sequentially by site-1 (MBTPS1, S1P) and site-2 (MBTPS2, S2P) proteases. The first cleavage by site-1 protease occurs within the luminal loop, the second cleavage by site-2 protease occurs within the first transmembrane domain, releasing the transcription factor from the Golgi membrane. Apoptosis triggers cleavage by the cysteine proteases caspase-3 and caspase-7. Cleavage and activation is induced by mediated cholesterol efflux. Post-translationally, phosphorylated by AMPK, leading to suppress protein processing and nuclear translocation, and repress target gene expression. In terms of processing, SCAP-free SREBF2 is ubiquitinated by the BCR(ARMC5) complex, leading to its degradation. Ubiquitinated; the nuclear form has a rapid turnover and is rapidly ubiquitinated and degraded by the proteasome in the nucleus.

The protein localises to the endoplasmic reticulum membrane. Its subcellular location is the golgi apparatus membrane. It is found in the cytoplasmic vesicle. It localises to the COPII-coated vesicle membrane. The protein resides in the nucleus. With respect to regulation, activation by cleavage is down-regulated upon activation of SIRT3-dependent PRKAA1/AMPK-alpha signaling cascade which leads to inhibition of ATP-consuming lipogenesis to restore cellular energy balance. Functionally, precursor of the transcription factor form (Processed sterol regulatory element-binding protein 2), which is embedded in the endoplasmic reticulum membrane. Low sterol concentrations promote processing of this form, releasing the transcription factor form that translocates into the nucleus and activates transcription of genes involved in cholesterol biosynthesis. Key transcription factor that regulates expression of genes involved in cholesterol biosynthesis. Binds to the sterol regulatory element 1 (SRE-1) (5'-ATCACCCCAC-3'). Has dual sequence specificity binding to both an E-box motif (5'-ATCACGTGA-3') and to SRE-1 (5'-ATCACCCCAC-3'). Regulates transcription of genes related to cholesterol synthesis pathway. Regulates hepatic lipogenesis. The chain is Sterol regulatory element-binding protein 2 from Rattus norvegicus (Rat).